The sequence spans 847 residues: Collagen alpha-1(I) chain (847 aa).

The tract at residues glycine 1 to arginine 847 is disordered. The span at proline 20–methionine 39 shows a compositional bias: low complexity. Residues asparagine 51 to glutamate 65 show a composition bias toward basic and acidic residues. Serine 85 carries the phosphoserine modification. 2 stretches are compositionally biased toward low complexity: residues aspartate 93–asparagine 109 and proline 127–alanine 145. Residues proline 147 to phenylalanine 159 show a composition bias toward pro residues. 7 stretches are compositionally biased toward low complexity: residues alanine 193–proline 208, glutamine 219–lysine 228, proline 298–threonine 314, proline 334–proline 343, proline 500–alanine 543, proline 551–alanine 599, and serine 628–proline 638. Serine 501 is modified (phosphoserine). The segment covering proline 685 to alanine 695 has biased composition (pro residues). A compositionally biased stretch (low complexity) spans proline 697–serine 712. The span at serine 731–valine 746 shows a compositional bias: pro residues. Positions alanine 763 to proline 777 are enriched in low complexity. Residues arginine 778–aspartate 789 show a composition bias toward basic and acidic residues. The span at serine 793 to proline 838 shows a compositional bias: low complexity.

Belongs to the fibrillar collagen family. As to quaternary structure, trimers of one alpha 2(I) and two alpha 1(I) chains. Post-translationally, prolines at the third position of the tripeptide repeating unit (G-X-Y) are hydroxylated in some or all of the chains. As to expression, forms the fibrils of tendon, ligaments and bones. In bones, the fibrils are mineralized with calcium hydroxyapatite.

The protein resides in the secreted. It is found in the extracellular space. It localises to the extracellular matrix. In terms of biological role, type I collagen is a member of group I collagen (fibrillar forming collagen). The sequence is that of Collagen alpha-1(I) chain from Cyclopes didactylus (Silky anteater).